Here is a 409-residue protein sequence, read N- to C-terminus: LysM domain-containing GPI-anchored protein LYP6 (409 aa).

The N-terminal stretch at 1–27 is a signal peptide; that stretch reads MAGWPAAEAAGALVVAILAAAAGGAAG. Cystine bridges form between Cys34-Cys100, Cys40-Cys166, Cys98-Cys164, and Cys100-Cys166. The 51-residue stretch at 110–160 folds into the LysM 1 domain; sequence VRYSARPADTLASVADVVFAGLASADQIRTANGLSAEDPDAPLDAGATLVV. Residue Asn168 is glycosylated (N-linked (GlcNAc...) asparagine). A LysM 2 domain is found at 179–222; that stretch reads LSYVVRVGDTVQSIAATHATTVTDISNVNAMGSPIVAPGDILAI. 2 cysteine pairs are disulfide-bonded: Cys227–Cys259 and Cys254–Cys282. N-linked (GlcNAc...) asparagine glycosylation occurs at Asn244. 3 N-linked (GlcNAc...) asparagine glycosylation sites follow: Asn291, Asn302, and Asn313. Positions 353–387 are disordered; that stretch reads SPAPGAGEAGGDIPGFPGSSNVSPANGPSGSVSQA. Positions 370–387 are enriched in polar residues; sequence GSSNVSPANGPSGSVSQA. A lipid anchor (GPI-anchor amidated alanine) is attached at Ala387. A propeptide spans 388 to 409 (removed in mature form); the sequence is ASVNRPHQIVALILSVALYFQM.

As to quaternary structure, interacts with LYP4. Interacts with CERK1. Interacts with CEBIP. As to expression, expressed in roots and leaves.

The protein resides in the cell membrane. Functionally, functions in innate immunity. Functions as a pattern recognition receptor (PRR), sensing bacterial peptidoglycan (PGN) and fungal chitin at the cell surface. Involved in resistance against the bacterial pathogen Xanthomonas oryzae pv. oryzae (Xoo) and the fungal pathogen Magnaporthe oryzae. Binds PGN and fungal chitin in vitro. Involved in microbe-associated molecular patterns (MAMPs) perception and participates in the activation of defense genes against the bacterial pathogen Xanthomonas oryzae pv. oryzicola (Xoc) or the fungal pathogen Magnaporthe oryzae. The chain is LysM domain-containing GPI-anchored protein LYP6 from Oryza sativa subsp. japonica (Rice).